A 275-amino-acid chain; its full sequence is Membrane protein insertase YidC 2 (275 aa).

A signal peptide spans 1 to 21; sequence MKKKNIILISVLLGALLLLTG. A lipid anchor (N-palmitoyl cysteine) is attached at Cys22. Residue Cys22 is the site of S-diacylglycerol cysteine attachment. 4 consecutive transmembrane segments (helical) span residues 48 to 68, 133 to 153, 174 to 194, and 212 to 232; these read FVAK…TLLI, QMGC…YYAI, MVLA…SMIG, and IMIL…WAVG.

This sequence belongs to the OXA1/ALB3/YidC family. Type 2 subfamily.

The protein localises to the cell membrane. Its function is as follows. Required for the insertion and/or proper folding and/or complex formation of integral membrane proteins into the membrane. Involved in integration of membrane proteins that insert both dependently and independently of the Sec translocase complex, as well as at least some lipoproteins. This is Membrane protein insertase YidC 2 from Listeria monocytogenes serotype 4b (strain F2365).